The chain runs to 704 residues: Elongation factor G (704 aa).

The 281-residue stretch at 10 to 290 (NKVRNIGIMA…AVIDYLPSPL (281 aa)) folds into the tr-type G domain. GTP contacts are provided by residues 19 to 26 (AHIDAGKT), 83 to 87 (DTPGH), and 137 to 140 (NKMD).

Belongs to the TRAFAC class translation factor GTPase superfamily. Classic translation factor GTPase family. EF-G/EF-2 subfamily.

Its subcellular location is the cytoplasm. Functionally, catalyzes the GTP-dependent ribosomal translocation step during translation elongation. During this step, the ribosome changes from the pre-translocational (PRE) to the post-translocational (POST) state as the newly formed A-site-bound peptidyl-tRNA and P-site-bound deacylated tRNA move to the P and E sites, respectively. Catalyzes the coordinated movement of the two tRNA molecules, the mRNA and conformational changes in the ribosome. The polypeptide is Elongation factor G (Clavibacter sepedonicus (Clavibacter michiganensis subsp. sepedonicus)).